Here is a 226-residue protein sequence, read N- to C-terminus: Lipid phosphate phosphatase gamma (226 aa).

Met1 carries the post-translational modification N-acetylmethionine. Transmembrane regions (helical) follow at residues 24–44 (LGHFLAWISLVPVFISLGGFV), 52–72 (ELQGIFFGIGLVISQFINEFI), 102–122 (FMFFFATYFSLMGCKGIGFWF), 128–148 (WIMNLLHWSLAVVTMYSRVYL), and 152–174 (TVAQVFAGAALGGIVGASWFWVV).

It belongs to the PA-phosphatase related phosphoesterase family. As to expression, expressed in root tips, root branch points, vascular tissue of cotyledons and leaves, pistil, anthers and filaments.

It is found in the plastid. It localises to the chloroplast inner membrane. With respect to regulation, inhibited by Mg(2+). In terms of biological role, exhibits phosphatidate phosphatase (PAP) activity in vitro. May play a primary role as PAP in plastids. The protein is Lipid phosphate phosphatase gamma (LPPG) of Arabidopsis thaliana (Mouse-ear cress).